A 542-amino-acid chain; its full sequence is Pre-mRNA-splicing factor 38B (542 aa).

The span at Met1–Ser12 shows a compositional bias: polar residues. Residues Met1–Ser41 are disordered. Ala2 carries the post-translational modification N-acetylalanine. Ser5 is subject to Phosphoserine. Positions Gln13–Gln28 are enriched in low complexity. Lys228 bears the N6-acetyllysine mark. The interval Gln233–Val542 is disordered. The segment covering Asp244–Val256 has biased composition (basic and acidic residues). Positions Glu257 to Glu285 are enriched in basic residues. 4 positions are modified to phosphoserine: Ser289, Ser291, Ser319, and Ser321. A compositionally biased stretch (basic and acidic residues) spans Phe292–Arg328. Positions Asp293–Ile322 form a coiled coil. Over residues Arg329 to Asp345 the composition is skewed to basic residues. The span at Arg346–Glu419 shows a compositional bias: basic and acidic residues. Residues Ser420–Ser447 show a composition bias toward basic residues. Phosphoserine is present on Ser445. The segment covering Arg448–Asn465 has biased composition (basic and acidic residues). A phosphoserine mark is found at Ser470, Ser472, and Ser478. Basic and acidic residues-rich tracts occupy residues Ser478 to Glu491 and Arg498 to His520. Phosphoserine occurs at positions 523, 525, and 530. The segment covering Ser530–Val542 has biased composition (basic and acidic residues).

The protein belongs to the PRP38 family.

Its subcellular location is the nucleus. In terms of biological role, may be required for pre-mRNA splicing. In Mus musculus (Mouse), this protein is Pre-mRNA-splicing factor 38B (Prpf38b).